The chain runs to 228 residues: Fluoride-specific ion channel FluC (228 aa).

The next 7 helical transmembrane spans lie at 3–23, 37–57, 72–92, 101–121, 141–161, 172–192, and 202–222; these read LSLFAIALGGAAGALARFWVS, GTLFINVSGSFLMGFLSVMMI, VGFLGAYTTFSTFSLETLALF, ALNVLLSVVLCLAAVWVGAVL, IFGAACGMSLLAGFAAALAFA, LVLVALTGLVVVGTLVALVVT, and LWGAFTLSAFAAVVFLSLGLV. Gly76 and Thr79 together coordinate Na(+).

It belongs to the fluoride channel Fluc/FEX (TC 1.A.43) family.

Its subcellular location is the cell inner membrane. The catalysed reaction is fluoride(in) = fluoride(out). With respect to regulation, na(+) is not transported, but it plays an essential structural role and its presence is essential for fluoride channel function. In terms of biological role, fluoride-specific ion channel. Important for reducing fluoride concentration in the cell, thus reducing its toxicity. This is Fluoride-specific ion channel FluC from Methylococcus capsulatus (strain ATCC 33009 / NCIMB 11132 / Bath).